The sequence spans 505 residues: Histidine ammonia-lyase (505 aa).

Positions 141–143 (ASG) form a cross-link, 5-imidazolinone (Ala-Gly). S142 carries the post-translational modification 2,3-didehydroalanine (Ser).

It belongs to the PAL/histidase family. Contains an active site 4-methylidene-imidazol-5-one (MIO), which is formed autocatalytically by cyclization and dehydration of residues Ala-Ser-Gly.

The protein resides in the cytoplasm. It catalyses the reaction L-histidine = trans-urocanate + NH4(+). The protein operates within amino-acid degradation; L-histidine degradation into L-glutamate; N-formimidoyl-L-glutamate from L-histidine: step 1/3. In Bacillus cereus (strain G9842), this protein is Histidine ammonia-lyase.